We begin with the raw amino-acid sequence, 282 residues long: ATP phosphoribosyltransferase (282 aa).

Belongs to the ATP phosphoribosyltransferase family. Long subfamily. Mg(2+) is required as a cofactor.

Its subcellular location is the cytoplasm. The catalysed reaction is 1-(5-phospho-beta-D-ribosyl)-ATP + diphosphate = 5-phospho-alpha-D-ribose 1-diphosphate + ATP. It participates in amino-acid biosynthesis; L-histidine biosynthesis; L-histidine from 5-phospho-alpha-D-ribose 1-diphosphate: step 1/9. Feedback inhibited by histidine. In terms of biological role, catalyzes the condensation of ATP and 5-phosphoribose 1-diphosphate to form N'-(5'-phosphoribosyl)-ATP (PR-ATP). Has a crucial role in the pathway because the rate of histidine biosynthesis seems to be controlled primarily by regulation of HisG enzymatic activity. This Micrococcus luteus (strain ATCC 4698 / DSM 20030 / JCM 1464 / CCM 169 / CCUG 5858 / IAM 1056 / NBRC 3333 / NCIMB 9278 / NCTC 2665 / VKM Ac-2230) (Micrococcus lysodeikticus) protein is ATP phosphoribosyltransferase.